We begin with the raw amino-acid sequence, 335 residues long: D-arabinose 1-dehydrogenase (335 aa).

Tyrosine 58 functions as the Proton donor in the catalytic mechanism. Histidine 124 lines the substrate pocket. 221-287 (SLLRSQETRQ…VSSMEELKLA (67 aa)) serves as a coordination point for NAD(+).

It belongs to the aldo/keto reductase family. Aldo/keto reductase 2 subfamily.

It carries out the reaction D-arabinose + NAD(+) = D-arabinono-1,4-lactone + NADH + H(+). In Saccharomyces cerevisiae (strain ATCC 204508 / S288c) (Baker's yeast), this protein is D-arabinose 1-dehydrogenase (ARA2).